A 426-amino-acid polypeptide reads, in one-letter code: Glutamate-1-semialdehyde 2,1-aminomutase (426 aa).

The residue at position 268 (K268) is an N6-(pyridoxal phosphate)lysine.

Belongs to the class-III pyridoxal-phosphate-dependent aminotransferase family. HemL subfamily. Pyridoxal 5'-phosphate serves as cofactor.

Its subcellular location is the cytoplasm. It carries out the reaction (S)-4-amino-5-oxopentanoate = 5-aminolevulinate. The protein operates within porphyrin-containing compound metabolism; protoporphyrin-IX biosynthesis; 5-aminolevulinate from L-glutamyl-tRNA(Glu): step 2/2. The chain is Glutamate-1-semialdehyde 2,1-aminomutase from Saccharolobus islandicus (strain Y.N.15.51 / Yellowstone #2) (Sulfolobus islandicus).